The following is a 315-amino-acid chain: GTP cyclohydrolase MptA (315 aa).

It belongs to the GTP cyclohydrolase IV family. In terms of assembly, homodimer. The cofactor is Fe(2+).

It catalyses the reaction GTP + H2O = 7,8-dihydroneopterin 2',3'-cyclic phosphate + formate + diphosphate + H(+). Its pathway is cofactor biosynthesis; 5,6,7,8-tetrahydromethanopterin biosynthesis. Its function is as follows. Converts GTP to 7,8-dihydro-D-neopterin 2',3'-cyclic phosphate, the first intermediate in the biosynthesis of coenzyme methanopterin. The protein is GTP cyclohydrolase MptA of Methanococcus maripaludis (strain C5 / ATCC BAA-1333).